We begin with the raw amino-acid sequence, 551 residues long: HTH-type transcriptional regulator SgrR (551 aa).

In terms of domain architecture, HTH marR-type spans 1–116 (MPSARLQQQF…LVSHLGRSFR (116 aa)). A DNA-binding region (H-T-H motif) is located at residues 26-49 (LNELAALLSCSRRHMRTLLNTMQD). Residues 163–492 (ELEADIAHHW…IDWQADAARW (330 aa)) are solute-binding.

Activates the small RNA gene sgrS under glucose-phosphate stress conditions as well as yfdZ. Represses its own transcription under both stress and non-stress conditions. Might act as a sensor of the intracellular accumulation of phosphoglucose by binding these molecules in its C-terminal solute-binding domain. This chain is HTH-type transcriptional regulator SgrR, found in Escherichia coli O6:K15:H31 (strain 536 / UPEC).